The primary structure comprises 56 residues: Photosystem II reaction center protein K (56 aa).

Positions 1-19 (MFNIFLDDAFIHSNNPFFG) are excised as a propeptide. A helical membrane pass occupies residues 35-55 (MPIIPVLSFLLAFVWQAAVSF).

Belongs to the PsbK family. As to quaternary structure, PSII is composed of 1 copy each of membrane proteins PsbA, PsbB, PsbC, PsbD, PsbE, PsbF, PsbH, PsbI, PsbJ, PsbK, PsbL, PsbM, PsbT, PsbX, PsbY, PsbZ, Psb30/Ycf12, at least 3 peripheral proteins of the oxygen-evolving complex and a large number of cofactors. It forms dimeric complexes.

Its subcellular location is the plastid. It localises to the chloroplast thylakoid membrane. Its function is as follows. One of the components of the core complex of photosystem II (PSII). PSII is a light-driven water:plastoquinone oxidoreductase that uses light energy to abstract electrons from H(2)O, generating O(2) and a proton gradient subsequently used for ATP formation. It consists of a core antenna complex that captures photons, and an electron transfer chain that converts photonic excitation into a charge separation. In Pinus thunbergii (Japanese black pine), this protein is Photosystem II reaction center protein K.